A 495-amino-acid chain; its full sequence is Cobyric acid synthase (495 aa).

Residues 262-445 (CLEIAVIRLP…LHGLFDNHRW (184 aa)) enclose the GATase cobBQ-type domain. Cysteine 340 (nucleophile) is an active-site residue. Histidine 437 is a catalytic residue.

It belongs to the CobB/CobQ family. CobQ subfamily.

The protein operates within cofactor biosynthesis; adenosylcobalamin biosynthesis. Functionally, catalyzes amidations at positions B, D, E, and G on adenosylcobyrinic A,C-diamide. NH(2) groups are provided by glutamine, and one molecule of ATP is hydrogenolyzed for each amidation. The polypeptide is Cobyric acid synthase (Synechococcus sp. (strain JA-3-3Ab) (Cyanobacteria bacterium Yellowstone A-Prime)).